The following is a 302-amino-acid chain: Pathogenicity locus probable regulatory protein HrpS (302 aa).

Residues 9–237 enclose the Sigma-54 factor interaction domain; that stretch reads DDLDEERVPN…LKAAAKRHVL (229 aa). ATP contacts are provided by residues 37–44 and 99–108; these read GETGTGKD and AQGGTLYLDE. The segment at residues 279–298 is a DNA-binding region (H-T-H motif); that stretch reads IDAASLELDMPRRTLYRRIK.

Member of the two-component regulatory system HrpR/HrpS that regulates the activation of the sigma factor hrpL which itself induces the expression of hprD as well as other hrp loci which are involved in plant pathogenicity, hrmA and avr genes. Probably interacts with sigma-54. The polypeptide is Pathogenicity locus probable regulatory protein HrpS (hrpS) (Pseudomonas savastanoi pv. phaseolicola (Pseudomonas syringae pv. phaseolicola)).